The primary structure comprises 394 residues: Elongation factor Tu (394 aa).

Residues 10–204 form the tr-type G domain; that stretch reads KTHLNVGTIG…TLDTYIEDPV (195 aa). The segment at 19–26 is G1; the sequence is GHVDHGKT. A GTP-binding site is contributed by 19–26; sequence GHVDHGKT. Residue threonine 26 coordinates Mg(2+). The interval 60-64 is G2; the sequence is GITIK. Residues 81-84 form a G3 region; sequence DCPG. GTP is bound by residues 81–85 and 136–139; these read DCPGH and NKCD. The G4 stretch occupies residues 136–139; the sequence is NKCD. Residues 174 to 176 are G5; that stretch reads SAL.

Belongs to the TRAFAC class translation factor GTPase superfamily. Classic translation factor GTPase family. EF-Tu/EF-1A subfamily. Monomer.

The protein localises to the cytoplasm. It carries out the reaction GTP + H2O = GDP + phosphate + H(+). In terms of biological role, GTP hydrolase that promotes the GTP-dependent binding of aminoacyl-tRNA to the A-site of ribosomes during protein biosynthesis. This Aster yellows witches'-broom phytoplasma (strain AYWB) protein is Elongation factor Tu.